The sequence spans 384 residues: Probable intron-encoded endonuclease Cox1-I1b (384 aa).

It belongs to the LAGLIDADG endonuclease family.

It is found in the mitochondrion. Its function is as follows. Probable mitochondrial DNA endonuclease involved in intron homing. The chain is Probable intron-encoded endonuclease Cox1-I1b (cox1-I1b) from Schizosaccharomyces pombe (strain 972 / ATCC 24843) (Fission yeast).